Here is a 223-residue protein sequence, read N- to C-terminus: Crossover junction endodeoxyribonuclease RuvC (223 aa).

Catalysis depends on residues Asp-12, Glu-73, and Asp-146. The Mg(2+) site is built by Asp-12, Glu-73, and Asp-146. The interval 182-223 (QGKLGKAKSTLNARNNAQVTGDAQVRAGHPSQFERPDRADPR) is disordered. Residues 190–202 (STLNARNNAQVTG) are compositionally biased toward polar residues. Basic and acidic residues predominate over residues 213-223 (QFERPDRADPR).

It belongs to the RuvC family. As to quaternary structure, homodimer which binds Holliday junction (HJ) DNA. The HJ becomes 2-fold symmetrical on binding to RuvC with unstacked arms; it has a different conformation from HJ DNA in complex with RuvA. In the full resolvosome a probable DNA-RuvA(4)-RuvB(12)-RuvC(2) complex forms which resolves the HJ. The cofactor is Mg(2+).

It is found in the cytoplasm. It catalyses the reaction Endonucleolytic cleavage at a junction such as a reciprocal single-stranded crossover between two homologous DNA duplexes (Holliday junction).. Its function is as follows. The RuvA-RuvB-RuvC complex processes Holliday junction (HJ) DNA during genetic recombination and DNA repair. Endonuclease that resolves HJ intermediates. Cleaves cruciform DNA by making single-stranded nicks across the HJ at symmetrical positions within the homologous arms, yielding a 5'-phosphate and a 3'-hydroxyl group; requires a central core of homology in the junction. The consensus cleavage sequence is 5'-(A/T)TT(C/G)-3'. Cleavage occurs on the 3'-side of the TT dinucleotide at the point of strand exchange. HJ branch migration catalyzed by RuvA-RuvB allows RuvC to scan DNA until it finds its consensus sequence, where it cleaves and resolves the cruciform DNA. The chain is Crossover junction endodeoxyribonuclease RuvC from Corynebacterium efficiens (strain DSM 44549 / YS-314 / AJ 12310 / JCM 11189 / NBRC 100395).